The following is a 176-amino-acid chain: Skp1-related protein (176 aa).

This sequence belongs to the SKP1 family. In terms of assembly, probable component of the SCF(sel-10) E3 ubiquitin-protein ligase complex containing F-box domain-containing protein sel-10 as the substrate recognition component. Interacts with cul-1. May interact with the F-box protein mec-15. Interacts with dre-1. Interacts with syg-1. Interacts with sel-10. As to expression, ubiquitously expressed in the adult.

Its function is as follows. Probable essential component of SCF (SKP1-CUL1-F-box protein) E3 ubiquitin-protein ligase complexes, which mediate the ubiquitination and subsequent proteasomal degradation of target proteins. Regulates cell proliferation during embryonic and larval development. Involved in synapse elimination in early synapse development. May negatively regulate the apoptotic activity of cep-1 in response to genotoxic stress. Plays a role in sex determination. This Caenorhabditis elegans protein is Skp1-related protein.